A 71-amino-acid chain; its full sequence is Small ribosomal subunit protein bS21 (71 aa).

The protein belongs to the bacterial ribosomal protein bS21 family.

In Acinetobacter baylyi (strain ATCC 33305 / BD413 / ADP1), this protein is Small ribosomal subunit protein bS21.